The chain runs to 245 residues: tRNA (guanine-N(1)-)-methyltransferase (245 aa).

S-adenosyl-L-methionine is bound by residues G114 and 134 to 139 (IGDYIL).

Belongs to the RNA methyltransferase TrmD family. As to quaternary structure, homodimer.

The protein resides in the cytoplasm. It carries out the reaction guanosine(37) in tRNA + S-adenosyl-L-methionine = N(1)-methylguanosine(37) in tRNA + S-adenosyl-L-homocysteine + H(+). Its function is as follows. Specifically methylates guanosine-37 in various tRNAs. The polypeptide is tRNA (guanine-N(1)-)-methyltransferase (Listeria welshimeri serovar 6b (strain ATCC 35897 / DSM 20650 / CCUG 15529 / CIP 8149 / NCTC 11857 / SLCC 5334 / V8)).